The chain runs to 452 residues: Phosphoglucosamine mutase (452 aa).

S98 functions as the Phosphoserine intermediate in the catalytic mechanism. Mg(2+)-binding residues include S98, D239, D241, and D243. Phosphoserine is present on S98.

The protein belongs to the phosphohexose mutase family. Requires Mg(2+) as cofactor. Post-translationally, activated by phosphorylation.

It carries out the reaction alpha-D-glucosamine 1-phosphate = D-glucosamine 6-phosphate. Functionally, catalyzes the conversion of glucosamine-6-phosphate to glucosamine-1-phosphate. In Anaplasma marginale (strain Florida), this protein is Phosphoglucosamine mutase.